The chain runs to 192 residues: 7-methyl-GTP pyrophosphatase (192 aa).

Residue Asp69 is the Proton acceptor of the active site.

The protein belongs to the Maf family. YceF subfamily. It depends on a divalent metal cation as a cofactor.

The protein localises to the cytoplasm. The enzyme catalyses N(7)-methyl-GTP + H2O = N(7)-methyl-GMP + diphosphate + H(+). In terms of biological role, nucleoside triphosphate pyrophosphatase that hydrolyzes 7-methyl-GTP (m(7)GTP). May have a dual role in cell division arrest and in preventing the incorporation of modified nucleotides into cellular nucleic acids. This is 7-methyl-GTP pyrophosphatase from Pseudomonas aeruginosa (strain ATCC 15692 / DSM 22644 / CIP 104116 / JCM 14847 / LMG 12228 / 1C / PRS 101 / PAO1).